A 252-amino-acid polypeptide reads, in one-letter code: Small ribosomal subunit protein uS2 (252 aa).

Belongs to the universal ribosomal protein uS2 family. As to quaternary structure, component of the small ribosomal subunit. Mature ribosomes consist of a small (40S) and a large (60S) subunit. The 40S subunit contains about 33 different proteins and 1 molecule of RNA (18S). The 60S subunit contains about 49 different proteins and 3 molecules of RNA (25S, 5.8S and 5S). Interacts with RPS21.

Its subcellular location is the cytoplasm. Required for the assembly and/or stability of the 40S ribosomal subunit. Required for the processing of the 20S rRNA-precursor to mature 18S rRNA in a late step of the maturation of 40S ribosomal subunits. In Encephalitozoon cuniculi (strain GB-M1) (Microsporidian parasite), this protein is Small ribosomal subunit protein uS2.